The following is a 202-amino-acid chain: dITP/XTP pyrophosphatase (202 aa).

T11–K16 provides a ligand contact to substrate. The active-site Proton acceptor is D73. Mg(2+) is bound at residue D73. Substrate is bound by residues S74, F155–D158, K178, and H183–R184.

It belongs to the HAM1 NTPase family. As to quaternary structure, homodimer. Mg(2+) is required as a cofactor.

The enzyme catalyses XTP + H2O = XMP + diphosphate + H(+). It carries out the reaction dITP + H2O = dIMP + diphosphate + H(+). It catalyses the reaction ITP + H2O = IMP + diphosphate + H(+). In terms of biological role, pyrophosphatase that catalyzes the hydrolysis of nucleoside triphosphates to their monophosphate derivatives, with a high preference for the non-canonical purine nucleotides XTP (xanthosine triphosphate), dITP (deoxyinosine triphosphate) and ITP. Seems to function as a house-cleaning enzyme that removes non-canonical purine nucleotides from the nucleotide pool, thus preventing their incorporation into DNA/RNA and avoiding chromosomal lesions. The sequence is that of dITP/XTP pyrophosphatase from Lactiplantibacillus plantarum (strain ATCC BAA-793 / NCIMB 8826 / WCFS1) (Lactobacillus plantarum).